The chain runs to 765 residues: MGVAAVLDWLVQDGERLASCRHDHPFAVLGPQASDQGWTVRMWMPEAQSVSLLQAGEEIAMTTPNHPWVFEAQVSQDPGCHYRVKVERGGIVHEQHDPWAFRGEWMGEMDRHLFAEGNHHHIWQKMGAHLTERDGITGVMFCLWAPNALSVSVIGDLNSWDGRHHPMQQRVGGIWELFVPGLEEGHLYKYEIRTQDGHCYQKADPYGFQHEVRPDNSSVVARLNGFQWSDQTWMQKRDSSNALDQPISVYEMHLGSWIHASADEPWIQPDGTPRPPVPAADMKPGARLLTYAELADRLIPYVKDRGFTHIEVMPITEHPFDGSWGYQVTGWYAPTSRYGTPDEFRAFVDRCHAEGIGVIIDWVPGHFPKDAHGLAFFDGAHLYEHSDPRIGEHKEWGTLIFNYSRNEVRNFLVANLIFWFEQFHIDGIRVDAVASMLYRDYLRPDGEWLPNESGGRENTEAVRFLQQANHVLFQHFPGALSIAEESTTWPMVTQPTDSGGLGFNLKWNMGWMHDMLDYFELDPWFRQFHQNNITFSIWYTYTENFMLALSHDEVVHGKSHLMHKMPGDDWQKYANTRALLSYMWTHPGKKTIFMGMEFGQRAEWNVWGDLQWDLLNYEPHKGIQRLVDDLNVLYKAEPALWRDDFDQFGFQWIDCNDNRHSVISFMRRESASGTWLVVVANFTPQSHSHYRVGVPLSGFYEEIFNSDAAKYGGSNLGNMGGKPTDEWGIHGYENSLDLCLPPLSLMVFKHDPKRSLNSSEPDNIV.

Residue aspartate 431 is the Nucleophile of the active site. Glutamate 484 acts as the Proton donor in catalysis.

It belongs to the glycosyl hydrolase 13 family. GlgB subfamily. Monomer.

It carries out the reaction Transfers a segment of a (1-&gt;4)-alpha-D-glucan chain to a primary hydroxy group in a similar glucan chain.. Its pathway is glycan biosynthesis; glycogen biosynthesis. In terms of biological role, catalyzes the formation of the alpha-1,6-glucosidic linkages in glycogen by scission of a 1,4-alpha-linked oligosaccharide from growing alpha-1,4-glucan chains and the subsequent attachment of the oligosaccharide to the alpha-1,6 position. In Synechococcus sp. (strain CC9605), this protein is 1,4-alpha-glucan branching enzyme GlgB.